Here is a 545-residue protein sequence, read N- to C-terminus: Chaperonin GroEL (545 aa).

Residues 29-32 (TIGP), 86-90 (DGTTT), Gly413, 478-480 (NAA), and Asp494 each bind ATP.

This sequence belongs to the chaperonin (HSP60) family. As to quaternary structure, forms a cylinder of 14 subunits composed of two heptameric rings stacked back-to-back. Interacts with the co-chaperonin GroES.

Its subcellular location is the cytoplasm. It catalyses the reaction ATP + H2O + a folded polypeptide = ADP + phosphate + an unfolded polypeptide.. Functionally, together with its co-chaperonin GroES, plays an essential role in assisting protein folding. The GroEL-GroES system forms a nano-cage that allows encapsulation of the non-native substrate proteins and provides a physical environment optimized to promote and accelerate protein folding. The protein is Chaperonin GroEL of Exiguobacterium sibiricum (strain DSM 17290 / CCUG 55495 / CIP 109462 / JCM 13490 / 255-15).